A 369-amino-acid chain; its full sequence is Homoserine O-succinyltransferase (369 aa).

The important for substrate specificity stretch occupies residues 90-93; the sequence is GISA. The region spanning 107–353 is the AB hydrolase-1 domain; that stretch reads WWSGAVGVRA…YGHDAFLKED (247 aa). Residue Ser-175 is the Nucleophile of the active site. A substrate-binding site is contributed by Arg-236. Active-site residues include Asp-316 and His-346. A substrate-binding site is contributed by Asp-347.

It belongs to the AB hydrolase superfamily. MetX family. Homodimer.

The protein resides in the cytoplasm. The enzyme catalyses L-homoserine + succinyl-CoA = O-succinyl-L-homoserine + CoA. It functions in the pathway amino-acid biosynthesis; L-methionine biosynthesis via de novo pathway; O-succinyl-L-homoserine from L-homoserine: step 1/1. Functionally, transfers a succinyl group from succinyl-CoA to L-homoserine, forming succinyl-L-homoserine. This Brevundimonas diminuta (strain ATCC 11568 / DSM 7234 / NBRC 12697 / NCIMB 9393 / NCTC 8545) protein is Homoserine O-succinyltransferase.